Reading from the N-terminus, the 65-residue chain is Large ribosomal subunit protein bL35 (65 aa).

This sequence belongs to the bacterial ribosomal protein bL35 family.

This chain is Large ribosomal subunit protein bL35, found in Caldicellulosiruptor bescii (strain ATCC BAA-1888 / DSM 6725 / KCTC 15123 / Z-1320) (Anaerocellum thermophilum).